The following is a 325-amino-acid chain: Transaldolase (325 aa).

Catalysis depends on Lys-125, which acts as the Schiff-base intermediate with substrate.

The protein belongs to the transaldolase family. Type 2 subfamily.

It localises to the cytoplasm. The enzyme catalyses D-sedoheptulose 7-phosphate + D-glyceraldehyde 3-phosphate = D-erythrose 4-phosphate + beta-D-fructose 6-phosphate. It functions in the pathway carbohydrate degradation; pentose phosphate pathway; D-glyceraldehyde 3-phosphate and beta-D-fructose 6-phosphate from D-ribose 5-phosphate and D-xylulose 5-phosphate (non-oxidative stage): step 2/3. Transaldolase is important for the balance of metabolites in the pentose-phosphate pathway. In Campylobacter jejuni subsp. jejuni serotype O:2 (strain ATCC 700819 / NCTC 11168), this protein is Transaldolase (tal).